Here is a 161-residue protein sequence, read N- to C-terminus: UPF0225 protein GSU1048 (161 aa).

It belongs to the UPF0225 family.

This is UPF0225 protein GSU1048 from Geobacter sulfurreducens (strain ATCC 51573 / DSM 12127 / PCA).